A 243-amino-acid polypeptide reads, in one-letter code: Adenosylcobinamide-GDP ribazoletransferase (243 aa).

Helical transmembrane passes span 8–28 (WLGA…PIQL), 36–56 (PWVG…LDFL), 58–78 (VPSP…TGGL), 107–127 (AGAF…TSLS), 131–151 (KGSV…WAIA), 187–207 (FLLP…LLIP), and 222–242 (YGAV…VGSA).

The protein belongs to the CobS family. Mg(2+) is required as a cofactor.

It localises to the cell inner membrane. It carries out the reaction alpha-ribazole + adenosylcob(III)inamide-GDP = adenosylcob(III)alamin + GMP + H(+). The catalysed reaction is alpha-ribazole 5'-phosphate + adenosylcob(III)inamide-GDP = adenosylcob(III)alamin 5'-phosphate + GMP + H(+). It functions in the pathway cofactor biosynthesis; adenosylcobalamin biosynthesis; adenosylcobalamin from cob(II)yrinate a,c-diamide: step 7/7. Joins adenosylcobinamide-GDP and alpha-ribazole to generate adenosylcobalamin (Ado-cobalamin). Also synthesizes adenosylcobalamin 5'-phosphate from adenosylcobinamide-GDP and alpha-ribazole 5'-phosphate. The protein is Adenosylcobinamide-GDP ribazoletransferase of Thermosynechococcus vestitus (strain NIES-2133 / IAM M-273 / BP-1).